A 302-amino-acid polypeptide reads, in one-letter code: Glycine--tRNA ligase alpha subunit (302 aa).

This sequence belongs to the class-II aminoacyl-tRNA synthetase family. As to quaternary structure, tetramer of two alpha and two beta subunits.

It localises to the cytoplasm. The catalysed reaction is tRNA(Gly) + glycine + ATP = glycyl-tRNA(Gly) + AMP + diphosphate. This is Glycine--tRNA ligase alpha subunit from Xanthomonas euvesicatoria pv. vesicatoria (strain 85-10) (Xanthomonas campestris pv. vesicatoria).